The sequence spans 499 residues: Serine/threonine-protein phosphatase 5 (499 aa).

The tract at residues 1-23 is disordered; sequence MAMAEGERTECAEPPRDEPPADG. Residue alanine 2 is modified to N-acetylalanine. TPR repeat units follow at residues 28–61, 62–95, and 96–129; these read AEEL…NPSN, AIYY…DKKY, and IKGY…KPHD. The interval 184–499 is catalytic; it reads GKVTISFMKE…ANTLLQLGMM (316 aa). Residues aspartate 242, histidine 244, and aspartate 271 each contribute to the Mn(2+) site. Histidine 244 contributes to the substrate binding site. Substrate contacts are provided by residues arginine 275 and 303–304; that span reads NH. Mn(2+) is bound at residue asparagine 303. Histidine 304 functions as the Proton donor/acceptor in the catalytic mechanism. Mn(2+) is bound at residue histidine 352. Substrate is bound by residues arginine 400 and histidine 427. Histidine 427 is a Mn(2+) binding site. Residues 495-499 are required for autoinhibition; that stretch reads QLGMM.

It belongs to the PPP phosphatase family. PP-5 (PP-T) subfamily. In terms of assembly, probably forms a complex composed of chaperones HSP90 and HSP70, co-chaperones STIP1/HOP, CDC37, PPP5C, PTGES3/p23, TSC1 and client protein TSC2. Probably forms a complex composed of chaperones HSP90 and HSP70, co-chaperones CDC37, PPP5C, TSC1 and client protein TSC2, CDK4, AKT, RAF1 and NR3C1; this complex does not contain co-chaperones STIP1/HOP and PTGES3/p23. Part of a complex with HSP90/HSP90AA1 and steroid receptors. Interacts (via TPR repeats) with HSP90AA1 (via TPR repeat-binding motif) or HSPA1A/HSPA1B; the interaction is direct and activates the phosphatase activity. Dissociates from HSPA1A/HSPA1B and HSP90AA1 in response to arachidonic acid. Interacts with CPNE1 (via VWFA domain). Interacts with CDC16, CDC27. Interacts with KLHDC10 (via the 6 Kelch repeats); inhibits the phosphatase activity on MAP3K5. Interacts with ATM and ATR; both interactions are induced by DNA damage and enhance ATM and ATR kinase activity. Interacts with RAD17; reduced by DNA damage. Interacts with nuclear receptors such as NR3C1/GCR and PPARG (activated by agonist); regulates their transactivation activities. Interacts (via TPR repeats) with S100 proteins S100A1, S100A2, S100A6, S100B and S100P; the interactions are calcium-dependent, strongly activate PPP5C phosphatase activity and compete with HSP90AA1 and MAP3K5 interactions. Interacts with SMAD2 and SMAD3 but not with SMAD1; decreases SMAD3 phosphorylation and protein levels. Interacts (via TPR repeats) with CRY1 and CRY2; the interaction with CRY2 down-regulates the phosphatase activity on CSNK1E. Interacts (via TPR repeats) with the active form of RAC1, GNA12 or GNA13; these interactions activate the phosphatase activity and translocate PPP5C to the cell membrane. Interacts with FLCN. Mg(2+) is required as a cofactor. Requires Mn(2+) as cofactor. In terms of processing, activated by at least two different proteolytic cleavages producing a 56 kDa and a 50 kDa form. Ubiquitous.

It localises to the nucleus. It is found in the cytoplasm. Its subcellular location is the cell membrane. The enzyme catalyses O-phospho-L-seryl-[protein] + H2O = L-seryl-[protein] + phosphate. It carries out the reaction O-phospho-L-threonyl-[protein] + H2O = L-threonyl-[protein] + phosphate. With respect to regulation, autoinhibited. In the autoinhibited state, the TPR domain interacts with the catalytic region and prevents substrate access to the catalytic pocket. Allosterically activated by various polyunsaturated fatty acids, free long-chain fatty-acids and long-chain fatty acyl-CoA esters, arachidonic acid being the most effective activator. HSP90A and probably RAC1, GNA12 and GNA13 can also release the autoinhibition by the TPR repeat. Activation by RAC1, GNA12 and GNA13 is synergistic with the one produced by fatty acids binding. Inhibited by okadaic acid. In terms of biological role, serine/threonine-protein phosphatase that dephosphorylates a myriad of proteins involved in different signaling pathways including the kinases CSNK1E, ASK1/MAP3K5, PRKDC and RAF1, the nuclear receptors NR3C1, PPARG, ESR1 and ESR2, SMAD proteins and TAU/MAPT. Implicated in wide ranging cellular processes, including apoptosis, differentiation, DNA damage response, cell survival, regulation of ion channels or circadian rhythms, in response to steroid and thyroid hormones, calcium, fatty acids, TGF-beta as well as oxidative and genotoxic stresses. Participates in the control of DNA damage response mechanisms such as checkpoint activation and DNA damage repair through, for instance, the regulation ATM/ATR-signaling and dephosphorylation of PRKDC and TP53BP1. Inhibits ASK1/MAP3K5-mediated apoptosis induced by oxidative stress. Plays a positive role in adipogenesis, mainly through the dephosphorylation and activation of PPARG transactivation function. Also dephosphorylates and inhibits the anti-adipogenic effect of NR3C1. Regulates the circadian rhythms, through the dephosphorylation and activation of CSNK1E. May modulate TGF-beta signaling pathway by the regulation of SMAD3 phosphorylation and protein expression levels. Dephosphorylates and may play a role in the regulation of TAU/MAPT. Through their dephosphorylation, may play a role in the regulation of ions channels such as KCNH2. Dephosphorylate FNIP1, disrupting interaction with HSP90AA1/Hsp90. The protein is Serine/threonine-protein phosphatase 5 (PPP5C) of Homo sapiens (Human).